A 172-amino-acid polypeptide reads, in one-letter code: Adenine phosphoribosyltransferase (172 aa).

It belongs to the purine/pyrimidine phosphoribosyltransferase family. In terms of assembly, homodimer.

It is found in the cytoplasm. It catalyses the reaction AMP + diphosphate = 5-phospho-alpha-D-ribose 1-diphosphate + adenine. Its pathway is purine metabolism; AMP biosynthesis via salvage pathway; AMP from adenine: step 1/1. Its function is as follows. Catalyzes a salvage reaction resulting in the formation of AMP, that is energically less costly than de novo synthesis. This Polynucleobacter necessarius subsp. necessarius (strain STIR1) protein is Adenine phosphoribosyltransferase.